Consider the following 260-residue polypeptide: Carbonic anhydrase 2 (260 aa).

Serine 2 is subject to N-acetylserine. Residue serine 2 is modified to Phosphoserine. The 257-residue stretch at 3–259 folds into the Alpha-carbonic anhydrase domain; that stretch reads HHWGYGKHNG…LKNRQIKASF (257 aa). Catalysis depends on histidine 64, which acts as the Proton donor/acceptor. Zn(2+) contacts are provided by histidine 94, histidine 96, and histidine 119. Phosphoserine occurs at positions 165 and 172. 198-199 serves as a coordination point for substrate; the sequence is TT.

This sequence belongs to the alpha-carbonic anhydrase family. As to quaternary structure, interacts with SLC4A4. Interaction with SLC4A7 regulates SLC4A7 transporter activity. Interacts with SLC26A6 isoform 4 (via C-terminus cytoplasmic domain). Zn(2+) serves as cofactor. The cofactor is Co(2+).

It is found in the cytoplasm. The protein resides in the cell membrane. It carries out the reaction hydrogencarbonate + H(+) = CO2 + H2O. The catalysed reaction is urea = cyanamide + H2O. Activated by X-ray, histamine, L-adrenaline, L- and D-phenylalanine, L- and D-histidine, L-His-OMe and beta-Ala-His (carnosine). Competitively inhibited by saccharin, thioxolone, coumarins, 667-coumate, celecoxib (Celebrex), valdecoxib (Bextra), SC-125, SC-560, diclofenac, acetate, azide, bromide, sulfonamide derivatives such as acetazolamide (AZA), methazolamide (MZA), ethoxzolamide (EZA), dichlorophenamide (DCP), brinzolamide, dansylamide, thiabendazole-5-sulfonamide, trifluoromethane sulfonamide and N-hydroxysulfamide, fructose-based sugar sulfamate RWJ-37497, and Foscarnet (phosphonoformate trisodium salt). Repressed strongly by hydrogen sulfide(HS) and weakly by nitrate (NO(3)). Esterase activity weakly reduced by cyanamide. N-hydroxyurea interferes with zinc binding and inhibit activity. Functionally, catalyzes the reversible hydration of carbon dioxide. Can also hydrate cyanamide to urea. Stimulates the chloride-bicarbonate exchange activity of SLC26A6. Essential for bone resorption and osteoclast differentiation. Involved in the regulation of fluid secretion into the anterior chamber of the eye. Contributes to intracellular pH regulation in the duodenal upper villous epithelium during proton-coupled peptide absorption. The polypeptide is Carbonic anhydrase 2 (CA2) (Homo sapiens (Human)).